The following is a 72-amino-acid chain: MAKSFYRYLLRFRHGHQEDPVVRFANGAYEDHSFPKGSTDYEELSGYLELNGDYLESMVVFDELWEQFLHEA.

It belongs to the UPF0346 family.

The polypeptide is UPF0346 protein GK1571 (Geobacillus kaustophilus (strain HTA426)).